The primary structure comprises 630 residues: Chaperone protein DnaK (630 aa).

Phosphothreonine; by autocatalysis is present on threonine 197. The segment covering lysine 604 to asparagine 618 has biased composition (polar residues). The interval lysine 604–lysine 630 is disordered. A compositionally biased stretch (basic and acidic residues) spans glutamate 619–lysine 630.

The protein belongs to the heat shock protein 70 family.

Acts as a chaperone. The polypeptide is Chaperone protein DnaK (Karelsulcia muelleri (strain GWSS) (Sulcia muelleri)).